A 161-amino-acid polypeptide reads, in one-letter code: Allophycocyanin alpha-B chain (161 aa).

An N4-methylasparagine modification is found at Asn-71. Cys-81 provides a ligand contact to (2R,3E)-phycocyanobilin.

This sequence belongs to the phycobiliprotein family. In terms of processing, contains one covalently linked bilin chromophore.

The protein resides in the plastid. The protein localises to the chloroplast thylakoid membrane. Allophycocyanin is a photosynthetic bile pigment-protein complex with maximum absorption at approximately 650 nanometers. The sequence is that of Allophycocyanin alpha-B chain (apcD) from Pyropia yezoensis (Susabi-nori).